We begin with the raw amino-acid sequence, 412 residues long: Polyferredoxin protein MvhB (412 aa).

12 consecutive 4Fe-4S ferredoxin-type domains span residues 2 to 29 (IVINKEDCIRCGACQGVCPTGAISVKPE), 30 to 57 (DVIYCDMCGGEPKCVEACPNDALRHEDI), 66 to 95 (KKITYSPEKCDKCGECVKVCPPGILKLVND), 96 to 127 (GKASRVPLEGFCVLCQQCVNVCPIEVIGIEGV), 138 to 166 (DKPIYIVDCVGCGLCVPECPVNAITLPKY), 168 to 197 (ESIEIDEEKCIKCGICAQTCPWNSVYISGK), 207 to 236 (ENFTLDKEECIGCNTCVEICPGGFIEPKSD), 237 to 265 (LTVSLPEICPACGLCEKLCPTDAIELEVK), 275 to 304 (EGIVYNDENCKFCGRCALNCPNEAIRVVSP), 311 to 344 (GLKKVDEKESYTICTTCGACTTVCPTGALKLVEV), 356 to 385 (NRIQYNPSLCDKCGNCVDVCPYGILKLTDD), and 386 to 412 (EKLPVKGFCILCEKCIDACRFNALLIK). [4Fe-4S] cluster is bound by residues Cys9, Cys12, Cys15, and Cys19. Positions 75, 78, 81, 85, 107, 110, 113, 117, 146, 149, 152, 156, 177, 180, 183, 187, 216, 219, 222, 226, 245, 248, 251, 255, 284, 287, 290, 294, 324, 327, 330, 334, 365, 368, 371, and 375 each coordinate [4Fe-4S] cluster.

Requires [4Fe-4S] cluster as cofactor.

The polypeptide is Polyferredoxin protein MvhB (mvhB) (Methanothermus fervidus).